The sequence spans 489 residues: Siroheme synthase (489 aa).

The segment at 1–203 is precorrin-2 dehydrogenase /sirohydrochlorin ferrochelatase; the sequence is MDFFPVFMRL…GREDAARETL (203 aa). Residues 22–23 and 43–44 contribute to the NAD(+) site; these read PV and PA. Residues 218–489 form a uroporphyrinogen-III C-methyltransferase region; it reads GEVFLVGAGP…ARSSTEGAEA (272 aa). An S-adenosyl-L-methionine-binding site is contributed by proline 227. Aspartate 250 serves as the catalytic Proton acceptor. Lysine 272 serves as the catalytic Proton donor. Residues 303–305, isoleucine 308, 333–334, methionine 385, and glycine 414 contribute to the S-adenosyl-L-methionine site; these read GGD and TA.

This sequence in the N-terminal section; belongs to the precorrin-2 dehydrogenase / sirohydrochlorin ferrochelatase family. In the C-terminal section; belongs to the precorrin methyltransferase family.

It carries out the reaction uroporphyrinogen III + 2 S-adenosyl-L-methionine = precorrin-2 + 2 S-adenosyl-L-homocysteine + H(+). It catalyses the reaction precorrin-2 + NAD(+) = sirohydrochlorin + NADH + 2 H(+). The enzyme catalyses siroheme + 2 H(+) = sirohydrochlorin + Fe(2+). Its pathway is cofactor biosynthesis; adenosylcobalamin biosynthesis; precorrin-2 from uroporphyrinogen III: step 1/1. It functions in the pathway cofactor biosynthesis; adenosylcobalamin biosynthesis; sirohydrochlorin from precorrin-2: step 1/1. It participates in porphyrin-containing compound metabolism; siroheme biosynthesis; precorrin-2 from uroporphyrinogen III: step 1/1. The protein operates within porphyrin-containing compound metabolism; siroheme biosynthesis; siroheme from sirohydrochlorin: step 1/1. Its pathway is porphyrin-containing compound metabolism; siroheme biosynthesis; sirohydrochlorin from precorrin-2: step 1/1. Multifunctional enzyme that catalyzes the SAM-dependent methylations of uroporphyrinogen III at position C-2 and C-7 to form precorrin-2 via precorrin-1. Then it catalyzes the NAD-dependent ring dehydrogenation of precorrin-2 to yield sirohydrochlorin. Finally, it catalyzes the ferrochelation of sirohydrochlorin to yield siroheme. This chain is Siroheme synthase, found in Thioalkalivibrio sulfidiphilus (strain HL-EbGR7).